The primary structure comprises 473 residues: Mannose-1-phosphate guanylyltransferase (473 aa).

The protein belongs to the mannose-6-phosphate isomerase type 2 family. As to quaternary structure, homodimer.

It catalyses the reaction alpha-D-mannose 1-phosphate + GTP + H(+) = GDP-alpha-D-mannose + diphosphate. It functions in the pathway nucleotide-sugar biosynthesis; GDP-alpha-D-mannose biosynthesis; GDP-alpha-D-mannose from alpha-D-mannose 1-phosphate (GTP route): step 1/1. It participates in bacterial outer membrane biogenesis; LPS O-antigen biosynthesis. Functionally, involved in GDP-mannose biosynthesis which serves as the activated sugar nucleotide precursor for mannose residues in cell surface polysaccharides. This enzyme participates in synthesis of the LPS group C2 O antigen. In Salmonella muenchen, this protein is Mannose-1-phosphate guanylyltransferase (rfbM).